The following is a 1405-amino-acid chain: MGSEPKPYAQPLDSAAAASTTKGSCGPRKPENPDFFSTVEDEQEDGFLRHLSESTEDFSLDMGALQGSEYLRDLGLGAPSDLHQSEVIMDPETHRQEARRESSHTSCEGASALPQRRSWERSRSCSGSCRRLSLDASTVDKGACLPRTLASLALNLSGNGQKIWTQGCLPVSGTPAPSSKECSSPEKRLRSKSVPVSCEISCMELASDSDVCTSPVQGLEPPVLECLEKDHVEPEHVLIVQQVLQELRQYHGARQRARMSTSPGGAHSNLTWFEFLSESEDGACKIEKPGKSTRVKRSLSSLRSRVTRQKEKGKSPAHLKDKTQDLPGKRECVNGHQLMRGTFSGHSSCPLCGEPLLNSASLKEHPRTTLLSDGSSPAPSRNVGMTISQKGGLQPTPSPAGSGVRLGPIAGDMDEADSVFLKLKQTADDSLSLTSSNAESVFIEDPYIASLRCEIESDAHEFEAESWSLSVDLAYAKKQKKEVVKRQDVLYELMQTEAHHVRTLKIMLKVYSRALQEELQFSGQAVSRLFPCADDLLDMHSHFLARLKERRQEFLEEGSDRNYVIQKIGDVLVQQFSGETGERMKEKYAVFCSGHNDAVGQYKLLLQQSKKFQNLIKKIGNFSIVRRLGVQECILLVTQRITKYPVLVERIIQNTEAGTEDYKDLSQALSLIKDIISQVDAKVSEYEKDQRLKEIAAKTDQKSSGKLKNGLTFRKEDMLQQRQLHLEGALCWKSTSGRLKDVLAVLLTDVLLLLQEKDQKYVFASVDSKPPVISLQKLIVREVANEEKAMFLISASMQGPEMYEMYTSSKEDRNIWMAHIRRAVESCPDEEEDVFSEAEEKKIAEARTMKLQEFQERLSLKDQLIAQSLLEKQQIYLEMAQLSGLEESAQNRGLFRGGGDPSETLRGEQILRSAMSEIEGIQSLICQRHLGSTSSQVEEGSVSAGLPRRAETFGGYDSVGSPSKGGSFKRKVSNSDLRPQDWQGPASSPDSRPCDNSAPSGCCEESPQAVEMPSTESLPTVLELELVHRVQTLSQLLLSLQAVIAQQDSYVEMQRTAIQEREKQFRLQSTRGNLLLEQERQRNFEKQREERAGVEKLQSQLRQEQQRWERERARQQQELELAGARLQEREGEARQMRQRLDQERTELERQRQAYQHDLERLREAQRAVDRERERLELLRRFKKQNTVPGALPPEVLAEAQPASHPPSFNGDGLEGHSAPAKAPGTQGSAMLHGTGPDNVERPEVARWDSAPPESRPAKSDVPIQLLSATNQIQRQTAVQQQIPTKLAASTKGGKEKGSKSRGSQRWESSASFDLKQQLLLSKFIGKDESASRNRRSLSPVLPAAHGSAPASDPCFPAPSPAPAATPPEAFKFGGTSLPPVSPASSLPTTPLATTDEVSKEDVIFF.

Disordered stretches follow at residues 1 to 47, 92 to 115, and 289 to 330; these read MGSE…EDGF, ETHR…ALPQ, and PGKS…PGKR. 2 stretches are compositionally biased toward basic and acidic residues: residues 92–103 and 308–330; these read ETHRQEARRESS and RQKE…PGKR. A C2H2-type; degenerate zinc finger spans residues 347–372; it reads SSCPLCGEPLLNSASLKEHPRTTLLS. One can recognise a DH domain in the interval 485 to 682; that stretch reads KRQDVLYELM…KDIISQVDAK (198 aa). A PH domain is found at 723-825; it reads QLHLEGALCW…WMAHIRRAVE (103 aa). Residues 936–1016 form a disordered region; that stretch reads QVEEGSVSAG…PQAVEMPSTE (81 aa). Thr952 carries the phosphothreonine modification. Ser961 carries the phosphoserine modification. Residues 1084–1181 are a coiled coil; it reads FEKQREERAG…RERLELLRRF (98 aa). Disordered regions lie at residues 1198 to 1242, 1274 to 1309, and 1328 to 1405; these read EAQP…VERP, RQTA…WESS, and ESAS…VIFF. Ser1336 and Ser1338 each carry phosphoserine. Residues 1355 to 1365 are compositionally biased toward pro residues; it reads FPAPSPAPAAT. Over residues 1375 to 1394 the composition is skewed to low complexity; that stretch reads TSLPPVSPASSLPTTPLATT. The segment covering 1396 to 1405 has biased composition (basic and acidic residues); it reads EVSKEDVIFF.

As to quaternary structure, interacts with SEPT9; interaction may inhibit GEF activity. Interacts with Gbetagamma subunits GNB1 and GNG2. Interacts with EPB41L4B. Interacts with PATJ (via C-terminus).

It localises to the cytoplasm. Its subcellular location is the cytoskeleton. The protein localises to the cell membrane. The protein resides in the apical cell membrane. Acts as a guanine nucleotide exchange factor (GEF) for RhoA GTPases. May play a role in actin cytoskeleton reorganization in different tissues since its activation induces formation of actin stress fibers. Also acts as a GEF for RAC1, inducing production of reactive oxygen species (ROS). Does not act as a GEF for CDC42. The G protein beta-gamma (Gbetagamma) subunits of heterotrimeric G proteins act as activators, explaining the integrated effects of LPA and other G-protein coupled receptor agonists on actin stress fiber formation, cell shape change and ROS production. Required for EPB41L4B-mediated regulation of the circumferential actomyosin belt in epithelial cells. The protein is Rho guanine nucleotide exchange factor 18 (Arhgef18) of Mus musculus (Mouse).